A 423-amino-acid chain; its full sequence is GPI mannosyltransferase 2 (423 aa).

9 helical membrane-spanning segments follow: residues 7 to 27 (LTLIFIAACLSRILHLTILSG), 102 to 122 (VILGGTIVANVAFVAATLVLY), 128 to 148 (IFNPTFAFLTSLLYLLPPTAT), 151 to 171 (APYTEPIYSLLTFSGIYLLSI), 191 to 211 (TGIFNSITLMCFAVFGDAHIF), 228 to 248 (FLSAILVVAPFFMFQHYTETV), 298 to 318 (LAMPILFSSLAGVVKFFSHLV), 333 to 353 (PPPILFELYSVHVLTMALLLF), and 400 to 420 (YWIGWTVVWGAVAAVLWAGHY).

Belongs to the PIGV family.

It localises to the endoplasmic reticulum membrane. It functions in the pathway glycolipid biosynthesis; glycosylphosphatidylinositol-anchor biosynthesis. Mannosyltransferase involved in glycosylphosphatidylinositol-anchor biosynthesis. Transfers the second mannose to the glycosylphosphatidylinositol during GPI precursor assembly. This is GPI mannosyltransferase 2 (GPI18) from Cryptococcus neoformans var. neoformans serotype D (strain B-3501A) (Filobasidiella neoformans).